Consider the following 317-residue polypeptide: MDFKIFLFLTAIFMIVGVTVSTATTNPTAPRAYRPRINTTAGVCELEVPIVNILPPELKHTAHTIRGNGSAPGFSKIKICCSGYKIVAHTPFHCTPDCPSGCGLGNCTAPNVCTCNKGAGFGPDGKCISVCPGRCLNGQCYGNFCNCNSGFVLEPNGRYCTGGCTRNCGPGGQCVGNNQCSCLSGFALNSQGTCQMICAPGFQQMGSACEPLCPKGCVNGECVAPGQCRCKSGYALNSSKVCAPKCSQPCYNGFCSAPNVCTCKEGYIKDATSRNGNRCIAYCAAGCPNGTCSAPNFCICKQGYIKQSKGSNVCVKQ.

The first 23 residues, 1–23, serve as a signal peptide directing secretion; that stretch reads MDFKIFLFLTAIFMIVGVTVSTA. Residues 24 to 33 form a may be required for E.coli agglutination activity region; that stretch reads TTNPTAPRAY. EGF-like domains lie at 93–128, 130–161, 163–195, 208–243, 245–280, and 282–315; these read HCTPDCPSGCGLGNCTAPNVCTCNKGAGFGPDGKCI, VCPGRCLNGQCYGNFCNCNSGFVLEPNGRYCT, GCTRNCGPGGQCVGNNQCSCLSGFALNSQGTCQ, ACEPLCPKGCVNGECVAPGQCRCKSGYALNSSKVCA, KCSQPCYNGFCSAPNVCTCKEGYIKDATSRNGNRCI, and YCAAGCPNGTCSAPNFCICKQGYIKQSKGSNVCV. 18 disulfides stabilise this stretch: Cys98/Cys107, Cys102/Cys113, Cys115/Cys127, Cys131/Cys140, Cys135/Cys145, Cys147/Cys160, Cys164/Cys174, Cys168/Cys180, Cys182/Cys194, Cys213/Cys222, Cys217/Cys228, Cys230/Cys242, Cys246/Cys255, Cys250/Cys261, Cys263/Cys279, Cys283/Cys292, Cys287/Cys298, and Cys300/Cys314.

It localises to the secreted. In terms of biological role, binds to lipopolysaccharides (LPS) present on the cell walls of Gram-negative bacteria, behaving as a pattern recognition receptor (PRR). Induces bacterial aggregation and enhances their subsequent clearance by the innate immune response. Binds to the inner core oligosaccharides region of rough-type bacterial LPS. Displays activity against the Gram-negative bacterium E.coli. Does not display any activity against the Gram-positive bacterium S.aureus or the fungi C.albicans. The polypeptide is Epidermal growth factor-like protein (Holotrichia diomphalia (Korean black chafer)).